Consider the following 210-residue polypeptide: Large ribosomal subunit protein uL4 (210 aa).

The span at 41–52 (QTNARQGTASTK) shows a compositional bias: polar residues. The tract at residues 41–71 (QTNARQGTASTKTRAEVRGGGRKPWRQKGTG) is disordered. A compositionally biased stretch (basic residues) spans 60–71 (GGRKPWRQKGTG).

It belongs to the universal ribosomal protein uL4 family. As to quaternary structure, part of the 50S ribosomal subunit.

One of the primary rRNA binding proteins, this protein initially binds near the 5'-end of the 23S rRNA. It is important during the early stages of 50S assembly. It makes multiple contacts with different domains of the 23S rRNA in the assembled 50S subunit and ribosome. Functionally, forms part of the polypeptide exit tunnel. This Nostoc sp. (strain PCC 7120 / SAG 25.82 / UTEX 2576) protein is Large ribosomal subunit protein uL4.